Reading from the N-terminus, the 683-residue chain is Kinesin-like protein KIF2B (683 aa).

Thr125 carries the phosphothreonine; by PLK1 modification. Residues 141-176 (LMTQRKSACLREIEKLQKQRERRRRLHREIRAQRAR) are a coiled coil. Ser204 carries the phosphoserine; by PLK1 modification. Residues 213-543 (RICVCVRKRP…LRYANRVKEI (331 aa)) form the Kinesin motor domain. 303-310 (GQTGSGKT) serves as a coordination point for ATP. Residues 640–672 (QLLSILEKKIDILTEIRRKLKLLQADIQKENRH) are a coiled coil.

The protein belongs to the TRAFAC class myosin-kinesin ATPase superfamily. Kinesin family. MCAK/KIF2 subfamily. Phosphorylation at Thr-125 by PLK1 is required for activity in the correction of kinetochore-microtubules attachment errors, while phosphorylation at Ser-204 also by PLK1 is required for the kinetochore localization and activity in prometaphase.

Its subcellular location is the cytoplasm. It is found in the cytoskeleton. The protein localises to the microtubule organizing center. The protein resides in the centrosome. It localises to the spindle. Its subcellular location is the chromosome. It is found in the centromere. The protein localises to the kinetochore. In terms of biological role, plus end-directed microtubule-dependent motor required for spindle assembly and chromosome movement during mitosis. Has microtubule depolymerization activity. Plays a role in chromosome congression. The polypeptide is Kinesin-like protein KIF2B (Bos taurus (Bovine)).